A 164-amino-acid polypeptide reads, in one-letter code: MTIAIYAGSFDPVTNGHMDVLKGALRLADEVIVAIGVHPGKKPLFTFEERVALIGESSKAILGKDAGRVSVISFDGLVIDAARKHAAQLMVRGLRDGTDLDYEMQMAGMNGTMAPELQTVFLPADPAVRTITATLVRQIASMGGDIKPFVPAAVAAALNTKFKS.

Ser-9 provides a ligand contact to substrate. ATP contacts are provided by residues 9–10 (SF) and His-17. Positions 41, 78, and 92 each coordinate substrate. ATP contacts are provided by residues 93–95 (GLR), Glu-103, and 128–134 (VRTITAT).

Belongs to the bacterial CoaD family. In terms of assembly, homohexamer. Mg(2+) is required as a cofactor.

Its subcellular location is the cytoplasm. It carries out the reaction (R)-4'-phosphopantetheine + ATP + H(+) = 3'-dephospho-CoA + diphosphate. Its pathway is cofactor biosynthesis; coenzyme A biosynthesis; CoA from (R)-pantothenate: step 4/5. In terms of biological role, reversibly transfers an adenylyl group from ATP to 4'-phosphopantetheine, yielding dephospho-CoA (dPCoA) and pyrophosphate. The sequence is that of Phosphopantetheine adenylyltransferase from Brucella anthropi (strain ATCC 49188 / DSM 6882 / CCUG 24695 / JCM 21032 / LMG 3331 / NBRC 15819 / NCTC 12168 / Alc 37) (Ochrobactrum anthropi).